Here is a 90-residue protein sequence, read N- to C-terminus: Sec-independent protein translocase protein TatA (90 aa).

A helical membrane pass occupies residues 1 to 21 (MGGASIWHWIVVGVIVMLLFG). Residues 42 to 90 (GMADEDQPQAPVANQSPPPVSATEPVRTLPPHQGEPAPAANASVDRKVG) are disordered.

It belongs to the TatA/E family. In terms of assembly, the Tat system comprises two distinct complexes: a TatABC complex, containing multiple copies of TatA, TatB and TatC subunits, and a separate TatA complex, containing only TatA subunits. Substrates initially bind to the TatABC complex, which probably triggers association of the separate TatA complex to form the active translocon.

Its subcellular location is the cell inner membrane. In terms of biological role, part of the twin-arginine translocation (Tat) system that transports large folded proteins containing a characteristic twin-arginine motif in their signal peptide across membranes. TatA could form the protein-conducting channel of the Tat system. The sequence is that of Sec-independent protein translocase protein TatA from Methylobacterium nodulans (strain LMG 21967 / CNCM I-2342 / ORS 2060).